We begin with the raw amino-acid sequence, 1399 residues long: DNA-directed RNA polymerase subunit beta' (1399 aa).

4 residues coordinate Zn(2+): Cys-70, Cys-72, Cys-85, and Cys-88. The Mg(2+) site is built by Asp-460, Asp-462, and Asp-464. Residues Cys-814, Cys-888, Cys-895, and Cys-898 each contribute to the Zn(2+) site. Positions 1367-1399 (SERKRQRDLGKPQRVSASEAEAALTEALNSSGN) are disordered. Positions 1382–1399 (SASEAEAALTEALNSSGN) are enriched in low complexity.

This sequence belongs to the RNA polymerase beta' chain family. As to quaternary structure, the RNAP catalytic core consists of 2 alpha, 1 beta, 1 beta' and 1 omega subunit. When a sigma factor is associated with the core the holoenzyme is formed, which can initiate transcription. It depends on Mg(2+) as a cofactor. Zn(2+) serves as cofactor.

It catalyses the reaction RNA(n) + a ribonucleoside 5'-triphosphate = RNA(n+1) + diphosphate. Functionally, DNA-dependent RNA polymerase catalyzes the transcription of DNA into RNA using the four ribonucleoside triphosphates as substrates. This chain is DNA-directed RNA polymerase subunit beta', found in Pseudomonas aeruginosa (strain UCBPP-PA14).